We begin with the raw amino-acid sequence, 150 residues long: uncharacterized protein (150 aa).

One can recognise an N-acetyltransferase domain in the interval isoleucine 4 to glutamine 149.

This sequence belongs to the acetyltransferase family.

This is an uncharacterized protein from Escherichia coli (strain K12).